The sequence spans 240 residues: Peptidyl-tRNA hydrolase (240 aa).

Position 14 (Tyr-14) interacts with tRNA. His-19 functions as the Proton acceptor in the catalytic mechanism. Phe-64, Asn-66, and Asn-112 together coordinate tRNA. The interval 196–227 is disordered; it reads EKPAQKQQPKQQSHIRQARSQQAPAKLPETGP. A compositionally biased stretch (polar residues) spans 209 to 218; sequence HIRQARSQQA.

The protein belongs to the PTH family. In terms of assembly, monomer.

The protein resides in the cytoplasm. It carries out the reaction an N-acyl-L-alpha-aminoacyl-tRNA + H2O = an N-acyl-L-amino acid + a tRNA + H(+). Hydrolyzes ribosome-free peptidyl-tRNAs (with 1 or more amino acids incorporated), which drop off the ribosome during protein synthesis, or as a result of ribosome stalling. Its function is as follows. Catalyzes the release of premature peptidyl moieties from peptidyl-tRNA molecules trapped in stalled 50S ribosomal subunits, and thus maintains levels of free tRNAs and 50S ribosomes. The polypeptide is Peptidyl-tRNA hydrolase (Mesorhizobium japonicum (strain LMG 29417 / CECT 9101 / MAFF 303099) (Mesorhizobium loti (strain MAFF 303099))).